The chain runs to 237 residues: Sugar fermentation stimulation protein homolog (237 aa).

This sequence belongs to the SfsA family.

The polypeptide is Sugar fermentation stimulation protein homolog (Pseudomonas putida (strain GB-1)).